The sequence spans 506 residues: Light-independent protochlorophyllide reductase subunit B (506 aa).

Asp-36 contacts [4Fe-4S] cluster. Asp-279 acts as the Proton donor in catalysis. 414–415 serves as a coordination point for substrate; it reads GL.

The protein belongs to the ChlB/BchB/BchZ family. As to quaternary structure, protochlorophyllide reductase is composed of three subunits; BchL, BchN and BchB. Forms a heterotetramer of two BchB and two BchN subunits. [4Fe-4S] cluster serves as cofactor.

It catalyses the reaction chlorophyllide a + oxidized 2[4Fe-4S]-[ferredoxin] + 2 ADP + 2 phosphate = protochlorophyllide a + reduced 2[4Fe-4S]-[ferredoxin] + 2 ATP + 2 H2O. It participates in porphyrin-containing compound metabolism; bacteriochlorophyll biosynthesis (light-independent). Its function is as follows. Component of the dark-operative protochlorophyllide reductase (DPOR) that uses Mg-ATP and reduced ferredoxin to reduce ring D of protochlorophyllide (Pchlide) to form chlorophyllide a (Chlide). This reaction is light-independent. The NB-protein (BchN-BchB) is the catalytic component of the complex. In Methylobacterium sp. (strain 4-46), this protein is Light-independent protochlorophyllide reductase subunit B.